The chain runs to 229 residues: Glutathione S-transferase 1 (229 aa).

The GST N-terminal domain occupies Ala-2 to Arg-86. The region spanning Asp-93 to Asn-229 is the GST C-terminal domain.

The protein belongs to the GST superfamily.

It catalyses the reaction RX + glutathione = an S-substituted glutathione + a halide anion + H(+). In terms of biological role, involved in the oxidative stress response and detoxification. This Schizosaccharomyces pombe (strain 972 / ATCC 24843) (Fission yeast) protein is Glutathione S-transferase 1 (gst1).